Reading from the N-terminus, the 459-residue chain is Jacalin-related lectin 12 (459 aa).

Jacalin-type lectin domains are found at residues 2-148 (SQDS…YFTP), 151-296 (PTRM…YITT), and 298-443 (TLTK…YSFP).

It belongs to the jacalin lectin family.

This Arabidopsis thaliana (Mouse-ear cress) protein is Jacalin-related lectin 12 (JAL12).